A 347-amino-acid chain; its full sequence is MAVAPNGRRLLRIEARNAQTPIEAKPRWIRTTATMGPEFRDMKKRVKGAGLHTVCQEAGCPNIHECWEDREATFLIGGDTCSRRCDFCDIKSGRPEPLDEDEPRRVAENVREIGLRYSTITGVTRDDLPDEGAWLYAEVVRQIHKLNPNTGVENLTPDFSGKPDLLQTVFEARPEVFAHNLETVPRIFKRIRPAFRYERSLDVIRQARDFGLVTKSNLILGMGETVDEVKSAMRDLRDAGCDILTVTQYLRPSNLHHPIERWVKPEEFVMYRDYGHDIGFAGVMAGPLVRSSYRAGRLYAQAIKARGEELPANLQHLGEGIDDTASQEASTLLSKYGASRETPVGAR.

7 residues coordinate [4Fe-4S] cluster: cysteine 55, cysteine 60, cysteine 66, cysteine 81, cysteine 85, cysteine 88, and serine 292. Positions 67–281 constitute a Radical SAM core domain; that stretch reads WEDREATFLI…RDYGHDIGFA (215 aa).

It belongs to the radical SAM superfamily. Lipoyl synthase family. The cofactor is [4Fe-4S] cluster.

The protein localises to the cytoplasm. The enzyme catalyses [[Fe-S] cluster scaffold protein carrying a second [4Fe-4S](2+) cluster] + N(6)-octanoyl-L-lysyl-[protein] + 2 oxidized [2Fe-2S]-[ferredoxin] + 2 S-adenosyl-L-methionine + 4 H(+) = [[Fe-S] cluster scaffold protein] + N(6)-[(R)-dihydrolipoyl]-L-lysyl-[protein] + 4 Fe(3+) + 2 hydrogen sulfide + 2 5'-deoxyadenosine + 2 L-methionine + 2 reduced [2Fe-2S]-[ferredoxin]. It participates in protein modification; protein lipoylation via endogenous pathway; protein N(6)-(lipoyl)lysine from octanoyl-[acyl-carrier-protein]: step 2/2. Its function is as follows. Catalyzes the radical-mediated insertion of two sulfur atoms into the C-6 and C-8 positions of the octanoyl moiety bound to the lipoyl domains of lipoate-dependent enzymes, thereby converting the octanoylated domains into lipoylated derivatives. The sequence is that of Lipoyl synthase from Corynebacterium kroppenstedtii (strain DSM 44385 / JCM 11950 / CIP 105744 / CCUG 35717).